The chain runs to 444 residues: ATP-dependent RNA helicase sub2 (444 aa).

The Q motif motif lies at 59-87 (TGFREFLLKPELLRAISWCGFEHPSEVQQ). Residues 90–265 (IPQAILGTDV…KKFMQNPLEI (176 aa)) enclose the Helicase ATP-binding domain. Position 103–110 (103–110 (AKSGLGKT)) interacts with ATP. A DECD box motif is present at residues 212 to 215 (DECD). A Helicase C-terminal domain is found at 277-438 (GLQQYYIKLE…EYPEGGVDSA (162 aa)).

It belongs to the DEAD box helicase family. DECD subfamily.

It is found in the nucleus. It carries out the reaction ATP + H2O = ADP + phosphate + H(+). Its function is as follows. ATP-binding RNA helicase involved in transcription elongation and required for the export of mRNA out of the nucleus. SUB2 also plays a role in pre-mRNA splicing and spliceosome assembly. May be involved in rDNA and telomeric silencing, and maintenance of genome integrity. In Sclerotinia sclerotiorum (strain ATCC 18683 / 1980 / Ss-1) (White mold), this protein is ATP-dependent RNA helicase sub2 (sub2).